The primary structure comprises 338 residues: Auxin-responsive protein IAA9 (338 aa).

Residues 1 to 25 (MSPEEELQSNVSVASSSPTSNCISR) form a disordered region. Residues 9–21 (SNVSVASSSPTSN) are compositionally biased toward low complexity. The short motif at 68–72 (LTLGL) is the EAR-like (transcriptional repression) element. Residues 150-186 (ATQSVTKKDVPQNIPKGQSSTTNNSSSPPAAKAQIVG) are disordered. Residues 168–180 (SSTTNNSSSPPAA) are compositionally biased toward low complexity. In terms of domain architecture, PB1 spans 216-318 (ALFVKVSMDG…VCKKLKIMKG (103 aa)).

This sequence belongs to the Aux/IAA family. Homodimers and heterodimers. Interacts with TPL. Phosphorylated by phytochrome A in vitro. Highly expressed in the whole plant.

It is found in the nucleus. Aux/IAA proteins are short-lived transcriptional factors that function as repressors of early auxin response genes at low auxin concentrations. Repression is thought to result from the interaction with auxin response factors (ARFs), proteins that bind to the auxin-responsive promoter element (AuxRE). Formation of heterodimers with ARF proteins may alter their ability to modulate early auxin response genes expression. This Arabidopsis thaliana (Mouse-ear cress) protein is Auxin-responsive protein IAA9 (IAA9).